The primary structure comprises 146 residues: Ribonuclease H (146 aa).

The RNase H type-1 domain occupies M1–D142. Mg(2+) contacts are provided by D9, E47, D70, and D134.

This sequence belongs to the RNase H family. As to quaternary structure, monomer. It depends on Mg(2+) as a cofactor.

The protein resides in the cytoplasm. The catalysed reaction is Endonucleolytic cleavage to 5'-phosphomonoester.. In terms of biological role, endonuclease that specifically degrades the RNA of RNA-DNA hybrids. The protein is Ribonuclease H of Ruthia magnifica subsp. Calyptogena magnifica.